Consider the following 205-residue polypeptide: Isochorismatase domain-containing protein 2 (205 aa).

Belongs to the isochorismatase family. Interacts with CDKN2A.

The protein resides in the cytoplasm. It is found in the nucleus. The sequence is that of Isochorismatase domain-containing protein 2 (ISOC2) from Macaca fascicularis (Crab-eating macaque).